A 192-amino-acid chain; its full sequence is Xanthine phosphoribosyltransferase (192 aa).

L20 and N27 together coordinate xanthine. 128–132 (ANGQA) contributes to the 5-phospho-alpha-D-ribose 1-diphosphate binding site. Residue K156 participates in xanthine binding.

This sequence belongs to the purine/pyrimidine phosphoribosyltransferase family. Xpt subfamily. As to quaternary structure, homodimer.

Its subcellular location is the cytoplasm. It catalyses the reaction XMP + diphosphate = xanthine + 5-phospho-alpha-D-ribose 1-diphosphate. It participates in purine metabolism; XMP biosynthesis via salvage pathway; XMP from xanthine: step 1/1. In terms of biological role, converts the preformed base xanthine, a product of nucleic acid breakdown, to xanthosine 5'-monophosphate (XMP), so it can be reused for RNA or DNA synthesis. This chain is Xanthine phosphoribosyltransferase, found in Ligilactobacillus salivarius (strain UCC118) (Lactobacillus salivarius).